Consider the following 1343-residue polypeptide: DNA-directed RNA polymerase subunit beta (1343 aa).

This sequence belongs to the RNA polymerase beta chain family. In terms of assembly, the RNAP catalytic core consists of 2 alpha, 1 beta, 1 beta' and 1 omega subunit. When a sigma factor is associated with the core the holoenzyme is formed, which can initiate transcription.

It catalyses the reaction RNA(n) + a ribonucleoside 5'-triphosphate = RNA(n+1) + diphosphate. In terms of biological role, DNA-dependent RNA polymerase catalyzes the transcription of DNA into RNA using the four ribonucleoside triphosphates as substrates. The protein is DNA-directed RNA polymerase subunit beta of Shewanella baltica (strain OS223).